Reading from the N-terminus, the 353-residue chain is Ribosomal RNA large subunit methyltransferase M (353 aa).

S-adenosyl-L-methionine is bound by residues Ser-179, 212–215 (APGG), Asp-231, Asp-251, and Asp-267. Lys-296 functions as the Proton acceptor in the catalytic mechanism.

It belongs to the class I-like SAM-binding methyltransferase superfamily. RNA methyltransferase RlmE family. RlmM subfamily. In terms of assembly, monomer.

Its subcellular location is the cytoplasm. It catalyses the reaction cytidine(2498) in 23S rRNA + S-adenosyl-L-methionine = 2'-O-methylcytidine(2498) in 23S rRNA + S-adenosyl-L-homocysteine + H(+). Catalyzes the 2'-O-methylation at nucleotide C2498 in 23S rRNA. This chain is Ribosomal RNA large subunit methyltransferase M, found in Laribacter hongkongensis (strain HLHK9).